Reading from the N-terminus, the 349-residue chain is Ribosomal RNA large subunit methyltransferase M (349 aa).

Residues S183, 216-219 (APGG), D235, D255, and D271 contribute to the S-adenosyl-L-methionine site. The active-site Proton acceptor is K300.

It belongs to the class I-like SAM-binding methyltransferase superfamily. RNA methyltransferase RlmE family. RlmM subfamily. Monomer.

The protein localises to the cytoplasm. The enzyme catalyses cytidine(2498) in 23S rRNA + S-adenosyl-L-methionine = 2'-O-methylcytidine(2498) in 23S rRNA + S-adenosyl-L-homocysteine + H(+). Its function is as follows. Catalyzes the 2'-O-methylation at nucleotide C2498 in 23S rRNA. This chain is Ribosomal RNA large subunit methyltransferase M, found in Stutzerimonas stutzeri (strain A1501) (Pseudomonas stutzeri).